The primary structure comprises 644 residues: (E2-independent) E3 ubiquitin-conjugating enzyme FATS (644 aa).

The required for interaction with p53/TP53 stretch occupies residues 1 to 67; it reads MISPVVISRL…LGILTPSDDQ (67 aa). Disordered stretches follow at residues 62 to 83, 305 to 349, 367 to 413, and 475 to 507; these read TPSD…LGKG, LGSG…SSHT, VLSG…SILS, and NEDP…EDSY. The interval 67-175 is required for interaction with HDAC1; sequence QGLETEPLST…RLSARQDYWV (109 aa). Residues 398 to 410 show a composition bias toward low complexity; sequence EGDSSPSSDGQPS. The span at 481–492 shows a compositional bias: pro residues; it reads TPEPSPATPSPS. The segment at 516–644 is ALMS motif; it reads TLQEALEVHR…LDQLLQRNAV (129 aa). The stretch at 598–629 forms a coiled coil; sequence KRIYNNLPEVKKKKEEQKKRMILQSNRLRAEV.

In terms of assembly, interacts with HDAC1; the interaction prevents binding of HDAC1 to CDKN1A/p21 and facilitates the acetylation and stabilization of CDKN1A/p21. Interacts with p53/TP53; the interaction inhibits binding of p53/TP53 and MDM2. Highly expressed in testis. Weak expression found in brain, lung, heart, ovary, thymus, spleen and kidney.

It localises to the cytoplasm. The protein resides in the cytoskeleton. It is found in the microtubule organizing center. Its subcellular location is the centrosome. Functionally, tumor suppressor that is required to sustain G2/M checkpoint after DNA damage. Acts as a p53/TP53 activator by inhibiting MDM2 binding to p53/TP53 and stimulating non-proteolytic polyubiquitination of p53/TP53. Exhibits ubiquitin ligase (E3) activity and assemble ubiquitin polymers through 'Lys-11'- (K11-), 'Lys-29'- (K29-) and 'Lys-63'- (K63)-linkages, independently of the ubiquitin-conjugating enzyme (E2). Promotes p53/TP53-dependent transcription of CDKN1A/p21, leading to robust checkpoint response. Mediates CDKN1A/p21 protein stability in a ubiquitin-independent manner. Interacts with HDAC1 and prevents binding of HDAC1 to CDKN1A/p21 and facilitates the acetylation and stabilization of CDKN1A/p21. May have a role in the assembly of primary cilia. This chain is (E2-independent) E3 ubiquitin-conjugating enzyme FATS, found in Mus musculus (Mouse).